Reading from the N-terminus, the 130-residue chain is MSEPNQLTRDQMTEIVKNIVVSVDVNENAVVISAKRLLSYFLKNVEGLEKILKVDVDKDNSIVVYASVKPTNPNLKSIILKVAVKESAFNLSQFKHEIIKAGDDVNIKIYVQQNESRTLAKNSSEEEVDF.

This is an uncharacterized protein from Sulfolobus islandicus filamentous virus (isolate Iceland/Hveragerdi) (SIFV).